We begin with the raw amino-acid sequence, 111 residues long: Nucleoid-associated protein TTE0040 (111 aa).

Belongs to the YbaB/EbfC family. Homodimer.

It is found in the cytoplasm. Its subcellular location is the nucleoid. Binds to DNA and alters its conformation. May be involved in regulation of gene expression, nucleoid organization and DNA protection. The polypeptide is Nucleoid-associated protein TTE0040 (Caldanaerobacter subterraneus subsp. tengcongensis (strain DSM 15242 / JCM 11007 / NBRC 100824 / MB4) (Thermoanaerobacter tengcongensis)).